Reading from the N-terminus, the 300-residue chain is Cation-efflux pump FieF (300 aa).

4 helical membrane passes run 12 to 32 (AAIA…FAWW), 39 to 59 (ILAA…NLLV), 82 to 102 (AALA…LTGI), and 114 to 134 (PGVG…LVSF). Positions 45 and 49 each coordinate Zn(2+). Positions 153 and 157 each coordinate Zn(2+). 2 helical membrane-spanning segments follow: residues 156 to 176 (SDVM…YGWH) and 178 to 198 (ADAL…LRMG).

This sequence belongs to the cation diffusion facilitator (CDF) transporter (TC 2.A.4) family. FieF subfamily. Homodimer.

The protein localises to the cell inner membrane. It carries out the reaction Zn(2+)(in) + H(+)(out) = Zn(2+)(out) + H(+)(in). The enzyme catalyses Cd(2+)(in) + H(+)(out) = Cd(2+)(out) + H(+)(in). The catalysed reaction is Fe(2+)(in) + H(+)(out) = Fe(2+)(out) + H(+)(in). Functionally, divalent metal cation transporter which exports Zn(2+), Cd(2+) and possibly Fe(2+). May be involved in zinc and iron detoxification by efflux. This chain is Cation-efflux pump FieF, found in Escherichia coli O157:H7 (strain EC4115 / EHEC).